A 467-amino-acid polypeptide reads, in one-letter code: Sialic acid-binding Ig-like lectin 12 (467 aa).

The N-terminal stretch at 1–18 is a signal peptide; that stretch reads MLLLLLLLLLWGIKGVEG. The Extracellular segment spans residues 19 to 353; it reads QNPQEVFTLN…ATLSEMMMGT (335 aa). The Ig-like V-type domain maps to 21–141; it reads PQEVFTLNVE…TKYNYMWDKM (121 aa). Intrachain disulfides connect Cys40–Cys176, Cys45–Cys108, and Cys170–Cys219. Asn46 is a glycosylation site (N-linked (GlcNAc...) asparagine). N-acetylneuraminate is bound at residue Arg126. Ig-like C2-type domains follow at residues 152 to 239 and 242 to 339; these read PQIL…LNVS and PKNL…LSLS. N-linked (GlcNAc...) asparagine glycans are attached at residues Asn167, Asn197, Asn216, Asn227, Asn237, Asn244, Asn262, Asn287, and Asn294. Cys278 and Cys323 are joined by a disulfide. Residues 354-374 form a helical membrane-spanning segment; sequence FVGSGVTALLFLSVCILLLAV. Residues 375–467 are Cytoplasmic-facing; the sequence is RSYRRKPARP…IKFPQRTAWP (93 aa). The ITIM motif motif lies at 430-435; sequence IHYATL. Phosphotyrosine is present on residues Tyr432 and Tyr455. The SLAM-like motif signature appears at 453 to 458; it reads TEYSEI.

The protein belongs to the immunoglobulin superfamily. SIGLEC (sialic acid binding Ig-like lectin) family. As to quaternary structure, homodimer; disulfide-linked. Interacts with PTPN6/SHP-1 and PTPN11/SHP-2 upon phosphorylation. Phosphorylation of Tyr-432 is required for binding to PTPN6 and PTPN11. Phosphorylation of Tyr-455 is involved in binding to PTPN6. Tyr-432 needs to be phosphorylated prior to Tyr-455. Expressed by monocytic/myeloid lineage cells. Found at higher levels in spleen, liver and heart. Found at lower levels in kidney and lung.

Its subcellular location is the membrane. Putative adhesion molecule that mediates sialic-acid dependent binding to cells. The sialic acid recognition site may be masked by cis interactions with sialic acids on the same cell surface. In the immune response, may act as an inhibitory receptor upon ligand induced tyrosine phosphorylation by recruiting cytoplasmic phosphatase(s) via their SH2 domain(s) that block signal transduction through dephosphorylation of signaling molecules. The chain is Sialic acid-binding Ig-like lectin 12 (Siglec12) from Mus musculus (Mouse).